We begin with the raw amino-acid sequence, 483 residues long: Regulatory protein ViaA (483 aa).

This sequence belongs to the ViaA family. As to quaternary structure, homodimer. Interacts with RavA.

It is found in the cytoplasm. Component of the RavA-ViaA chaperone complex, which may act on the membrane to optimize the function of some of the respiratory chains. ViaA stimulates the ATPase activity of RavA. The protein is Regulatory protein ViaA of Escherichia coli (strain SMS-3-5 / SECEC).